The following is a 131-amino-acid chain: Small ribosomal subunit protein bS6 (131 aa).

The segment at 98 to 131 (EASPMVKAKDERRERRDDFANETADDAEAGDSEE) is disordered. A compositionally biased stretch (basic and acidic residues) spans 104–116 (KAKDERRERRDDF). The segment covering 120 to 131 (TADDAEAGDSEE) has biased composition (acidic residues).

Belongs to the bacterial ribosomal protein bS6 family.

Binds together with bS18 to 16S ribosomal RNA. The sequence is that of Small ribosomal subunit protein bS6 from Salmonella dublin (strain CT_02021853).